The following is a 771-amino-acid chain: ATP-dependent DNA helicase UvrD1 (771 aa).

The tract at residues 1–21 (MSVHATDAKPPGPSPADQLLD) is disordered. In terms of domain architecture, UvrD-like helicase ATP-binding spans 21-311 (DGLNPQQRQA…ILLEQNYRST (291 aa)). ATP is bound by residues 45–50 (GSGKTA) and Arg-309. The 292-residue stretch at 312–603 (QNILSAANSV…TLMTLHTAKG (292 aa)) folds into the UvrD-like helicase C-terminal domain. The interval 691–716 (FSAPVSGAGRFGSARPSPTRSGASRR) is disordered.

It belongs to the helicase family. UvrD subfamily. Monomer. Mg(2+) serves as cofactor.

It catalyses the reaction Couples ATP hydrolysis with the unwinding of duplex DNA by translocating in the 3'-5' direction.. It carries out the reaction ATP + H2O = ADP + phosphate + H(+). In terms of biological role, DNA-dependent ATPase, acting on dsDNA with a 3'-ssDNA tail, unwinding with 3'-to 5'-polarity. Also highly efficient on nicked DNA. Involved in the post-incision events of nucleotide excision repair. The protein is ATP-dependent DNA helicase UvrD1 (uvrD1) of Mycobacterium bovis (strain ATCC BAA-935 / AF2122/97).